The following is a 561-amino-acid chain: Putative ABC transporter ATP-binding protein SAV_5847 (561 aa).

One can recognise an ABC transporter 1 domain in the interval 2 to 243 (IRFEDVSVTY…SPVYPPVVDL (242 aa)). 36 to 43 (GPSGVGKS) contacts ATP. The disordered stretch occupies residues 268 to 299 (ERLAATETPTPTATATATAAPAPSPSRPRRPR). The span at 272–288 (ATETPTPTATATATAAP) shows a compositional bias: low complexity. The ABC transporter 2 domain maps to 315 to 543 (AAVEALAVRR…SPSFAPQVTK (229 aa)). 347–354 (GRNGAGKS) lines the ATP pocket.

Belongs to the ABC transporter superfamily.

The protein resides in the cell membrane. In terms of biological role, probably part of an ABC transporter complex. Responsible for energy coupling to the transport system. The protein is Putative ABC transporter ATP-binding protein SAV_5847 of Streptomyces avermitilis (strain ATCC 31267 / DSM 46492 / JCM 5070 / NBRC 14893 / NCIMB 12804 / NRRL 8165 / MA-4680).